The primary structure comprises 501 residues: Lycopene beta cyclase, chloroplastic (501 aa).

The N-terminal 48 residues, 1–48 (MDTLLKTPNKLDFFIPQFHGFERLCSNNPYHSRVRLGVKKRAIKIVSS), are a transit peptide targeting the chloroplast. An N-acetylvaline modification is found at valine 49. 85–113 (LAIVGGGPAGLAVAQQVSEAGLSVCSIDP) contacts NAD(+).

This sequence belongs to the lycopene cyclase family.

The protein localises to the plastid. It localises to the chloroplast. It catalyses the reaction a carotenoid psi-end group = a carotenoid beta-end derivative. The protein operates within carotenoid biosynthesis; beta-carotene biosynthesis. It functions in the pathway carotenoid biosynthesis; beta-zeacarotene biosynthesis. Its function is as follows. Involved in carotenoid biosynthesis. Catalyzes the double cyclization reaction which converts lycopene to beta-carotene and neurosporene to beta-zeacarotene. Major lycopene beta-cyclase that does not seem to be involved in neoxanthin synthesis. Involved in salt tolerance improvement by increasing synthesis of carotenoids, which impairs reactive oxygen species (ROS) and protects the photosynthetic system under salt stress. The sequence is that of Lycopene beta cyclase, chloroplastic from Arabidopsis thaliana (Mouse-ear cress).